A 383-amino-acid polypeptide reads, in one-letter code: Lipoyl synthase, mitochondrial (383 aa).

The N-terminal 19 residues, 1-19 (MHASTLTRCMRVAQNARCL), are a transit peptide targeting the mitochondrion. The tract at residues 69-97 (DAAPGTKPSRKPNASNRKPKWLKAQPTQG) is disordered. C116, C121, C127, C147, C151, C154, and S362 together coordinate [4Fe-4S] cluster. The 220-residue stretch at 132–351 (KDGIATATIM…QKVAEQMGFL (220 aa)) folds into the Radical SAM core domain.

Belongs to the radical SAM superfamily. Lipoyl synthase family. The cofactor is [4Fe-4S] cluster.

It is found in the mitochondrion. It catalyses the reaction [[Fe-S] cluster scaffold protein carrying a second [4Fe-4S](2+) cluster] + N(6)-octanoyl-L-lysyl-[protein] + 2 oxidized [2Fe-2S]-[ferredoxin] + 2 S-adenosyl-L-methionine + 4 H(+) = [[Fe-S] cluster scaffold protein] + N(6)-[(R)-dihydrolipoyl]-L-lysyl-[protein] + 4 Fe(3+) + 2 hydrogen sulfide + 2 5'-deoxyadenosine + 2 L-methionine + 2 reduced [2Fe-2S]-[ferredoxin]. It functions in the pathway protein modification; protein lipoylation via endogenous pathway; protein N(6)-(lipoyl)lysine from octanoyl-[acyl-carrier-protein]: step 2/2. Its function is as follows. Catalyzes the radical-mediated insertion of two sulfur atoms into the C-6 and C-8 positions of the octanoyl moiety bound to the lipoyl domains of lipoate-dependent enzymes, thereby converting the octanoylated domains into lipoylated derivatives. The protein is Lipoyl synthase, mitochondrial of Phytophthora infestans (strain T30-4) (Potato late blight agent).